The sequence spans 78 residues: MSLEERVKEIIAEQLGVEKEKITPEAKFVEDLGADSLDVVELIMAFEEEFGIEIPDEDAEKIQTVGDVINYLKEKVGG.

The Carrier domain maps to 1 to 76; it reads MSLEERVKEI…DVINYLKEKV (76 aa). Position 36 is an O-(pantetheine 4'-phosphoryl)serine (Ser36).

It belongs to the acyl carrier protein (ACP) family. In terms of processing, 4'-phosphopantetheine is transferred from CoA to a specific serine of apo-ACP by AcpS. This modification is essential for activity because fatty acids are bound in thioester linkage to the sulfhydryl of the prosthetic group.

It localises to the cytoplasm. The protein operates within lipid metabolism; fatty acid biosynthesis. Carrier of the growing fatty acid chain in fatty acid biosynthesis. In Aquifex aeolicus (strain VF5), this protein is Acyl carrier protein.